A 44-amino-acid chain; its full sequence is Small, acid-soluble spore protein N (44 aa).

Residues 1-44 (MGNPKKNSKDFAPNHIGTQSKKAGGNKGKQMQDQTGKQPIVDNG) form a disordered region.

Belongs to the SspN family.

The protein localises to the spore core. This chain is Small, acid-soluble spore protein N, found in Bacillus anthracis (strain A0248).